Consider the following 272-residue polypeptide: Hydroxyethylthiazole kinase (272 aa).

M46 is a binding site for substrate. The ATP site is built by R122 and T168. A substrate-binding site is contributed by G195.

Belongs to the Thz kinase family. Mg(2+) is required as a cofactor.

The enzyme catalyses 5-(2-hydroxyethyl)-4-methylthiazole + ATP = 4-methyl-5-(2-phosphooxyethyl)-thiazole + ADP + H(+). The protein operates within cofactor biosynthesis; thiamine diphosphate biosynthesis; 4-methyl-5-(2-phosphoethyl)-thiazole from 5-(2-hydroxyethyl)-4-methylthiazole: step 1/1. In terms of biological role, catalyzes the phosphorylation of the hydroxyl group of 4-methyl-5-beta-hydroxyethylthiazole (THZ). The protein is Hydroxyethylthiazole kinase of Alkaliphilus metalliredigens (strain QYMF).